The sequence spans 317 residues: Ferrochelatase (317 aa).

Fe cation-binding residues include H192 and E271.

It belongs to the ferrochelatase family.

Its subcellular location is the cytoplasm. The catalysed reaction is heme b + 2 H(+) = protoporphyrin IX + Fe(2+). It participates in porphyrin-containing compound metabolism; protoheme biosynthesis; protoheme from protoporphyrin-IX: step 1/1. Catalyzes the ferrous insertion into protoporphyrin IX. In Geobacter sp. (strain M21), this protein is Ferrochelatase.